A 201-amino-acid polypeptide reads, in one-letter code: MEESVHQSIRFGSVADLIMWKNRRGGFLLLGSTTLLWFLFEKCGYSFFPFVVNTQLLSVVILFLWAKSAILFNRPMPQLPNLEITEEFVFMVADAIRVWINTVLAVAREIYVGRNAKQLFRVSVVLWTVSFVGNFLNFLTILYLGVVLSLLIPFLYERYQDLIDEKLSLTHRVIQTQYRKIDERLLQKIIAKPTNKIKKMQ.

Positions 14–201 (VADLIMWKNR…KPTNKIKKMQ (188 aa)) constitute a Reticulon domain. Transmembrane regions (helical) follow at residues 25-45 (GGFL…KCGY), 46-66 (SFFP…FLWA), and 135-155 (FLNF…IPFL).

Its subcellular location is the endoplasmic reticulum membrane. In Arabidopsis thaliana (Mouse-ear cress), this protein is Reticulon-like protein B10 (RTNLB10).